The sequence spans 542 residues: Phosphoenolpyruvate carboxykinase (ATP) (542 aa).

Substrate contacts are provided by R67, Y208, and K214. ATP is bound by residues K214, H233, and 249 to 257 (GLSGTGKTT). Positions 214 and 233 each coordinate Mn(2+). Residue D270 coordinates Mn(2+). Residues E298, R334, 450 to 451 (RI), and T456 contribute to the ATP site. R334 is a binding site for substrate.

This sequence belongs to the phosphoenolpyruvate carboxykinase (ATP) family. In terms of assembly, monomer. It depends on Mn(2+) as a cofactor.

The protein localises to the cytoplasm. It carries out the reaction oxaloacetate + ATP = phosphoenolpyruvate + ADP + CO2. It participates in carbohydrate biosynthesis; gluconeogenesis. In terms of biological role, involved in the gluconeogenesis. Catalyzes the conversion of oxaloacetate (OAA) to phosphoenolpyruvate (PEP) through direct phosphoryl transfer between the nucleoside triphosphate and OAA. The sequence is that of Phosphoenolpyruvate carboxykinase (ATP) from Vibrio vulnificus (strain CMCP6).